The sequence spans 349 residues: Phenylalanine--tRNA ligase alpha subunit (349 aa).

Mg(2+) is bound at residue glutamate 259.

The protein belongs to the class-II aminoacyl-tRNA synthetase family. Phe-tRNA synthetase alpha subunit type 1 subfamily. As to quaternary structure, tetramer of two alpha and two beta subunits. Requires Mg(2+) as cofactor.

The protein localises to the cytoplasm. The enzyme catalyses tRNA(Phe) + L-phenylalanine + ATP = L-phenylalanyl-tRNA(Phe) + AMP + diphosphate + H(+). In Lactobacillus helveticus (strain DPC 4571), this protein is Phenylalanine--tRNA ligase alpha subunit.